The chain runs to 303 residues: MTAITQDAAERDQAQAESKAATLIESLSWLQRFHDRIVVVKFGGNAMVDEELTRTFAEDVVYLRYAGLRPVVVHGGGPQISAMLTRLGIESEFRGGYRVTTPEVLEVVRMVLTGQVSRDVVRGINAHGPLAAAVSGEDAGLFTGRRRGAVVDGVEVDLGLVGDVVAVDPTAVLAQLDAGRIPVVSSIAPDESDPAVSLNVNADAAAAALAVALGAEKLVILTDVAGLYRDWPDRGSLVSDIRSDELRALLPSLESGMIPKMAACLEAVDGGVPKAAIIDGRIPHSMLLEIFTTNGIGTEVVPA.

Substrate contacts are provided by residues 76–77 (GG), arginine 98, and asparagine 199.

The protein belongs to the acetylglutamate kinase family. ArgB subfamily.

The protein localises to the cytoplasm. The catalysed reaction is N-acetyl-L-glutamate + ATP = N-acetyl-L-glutamyl 5-phosphate + ADP. It participates in amino-acid biosynthesis; L-arginine biosynthesis; N(2)-acetyl-L-ornithine from L-glutamate: step 2/4. Catalyzes the ATP-dependent phosphorylation of N-acetyl-L-glutamate. The protein is Acetylglutamate kinase of Clavibacter michiganensis subsp. michiganensis (strain NCPPB 382).